A 46-amino-acid chain; its full sequence is Escargot/snail protein homolog (46 aa).

C2H2-type zinc fingers lie at residues 1 to 4, 8 to 30, and 36 to 46; these read IRTH, CKCP…TTHH, and FSCQHCNRAFA.

This sequence belongs to the snail C2H2-type zinc-finger protein family.

The protein resides in the nucleus. In Oryzias latipes (Japanese rice fish), this protein is Escargot/snail protein homolog.